The primary structure comprises 176 residues: Ribosome rescue factor SmrB (176 aa).

A Smr domain is found at Leu93 to Asp168.

It belongs to the SmrB family. As to quaternary structure, associates with collided ribosomes, but not with correctly translating polysomes.

Its function is as follows. Acts as a ribosome collision sensor. Detects stalled/collided disomes (pairs of ribosomes where the leading ribosome is stalled and a second ribosome has collided with it) and endonucleolytically cleaves mRNA at the 5' boundary of the stalled ribosome. Stalled/collided disomes form a new interface (primarily via the 30S subunits) that binds SmrB. Cleaved mRNA becomes available for tmRNA ligation, leading to ribosomal subunit dissociation and rescue of stalled ribosomes. This Shewanella putrefaciens (strain CN-32 / ATCC BAA-453) protein is Ribosome rescue factor SmrB.